The primary structure comprises 218 residues: Cold-regulated protein 28 (218 aa).

Disordered stretches follow at residues 1–51 (MEND…ADSK) and 166–218 (TKHS…KPRT). The segment covering 20–37 (EASAESQSESTLSNSLDS) has biased composition (low complexity). Residues 186–207 (GEVSKKREREANNDDSSLKEDQ) show a composition bias toward basic and acidic residues.

The protein localises to the nucleus. Functionally, together with COR27, involved in central circadian clock regulation and in flowering promotion, by binding to the chromatin of clock-associated evening genes TOC1, PRR5, ELF4 and cold-responsive genes in order to repress their transcription. Negative regulator of freezing tolerance. The polypeptide is Cold-regulated protein 28 (Arabidopsis thaliana (Mouse-ear cress)).